A 131-amino-acid polypeptide reads, in one-letter code: Large ribosomal subunit protein bL12 (131 aa).

Residues 99–125 are compositionally biased toward basic and acidic residues; that stretch reads ESTPKPIKEGTNKDDAEETKKKLEEAG. Positions 99–131 are disordered; that stretch reads ESTPKPIKEGTNKDDAEETKKKLEEAGAKVTVK.

The protein belongs to the bacterial ribosomal protein bL12 family. In terms of assembly, homodimer. Part of the ribosomal stalk of the 50S ribosomal subunit. Forms a multimeric L10(L12)X complex, where L10 forms an elongated spine to which 2 to 4 L12 dimers bind in a sequential fashion. Binds GTP-bound translation factors.

Its function is as follows. Forms part of the ribosomal stalk which helps the ribosome interact with GTP-bound translation factors. Is thus essential for accurate translation. The polypeptide is Large ribosomal subunit protein bL12 (Gloeothece citriformis (strain PCC 7424) (Cyanothece sp. (strain PCC 7424))).